The chain runs to 365 residues: 3-dehydroquinate synthase (365 aa).

NAD(+) contacts are provided by residues 69-74, 103-107, 127-128, Lys140, and Lys149; these read DGEKYK, GVIGD, and TT. 3 residues coordinate Zn(2+): Glu182, His245, and His262.

The protein belongs to the sugar phosphate cyclases superfamily. Dehydroquinate synthase family. Co(2+) is required as a cofactor. The cofactor is Zn(2+). Requires NAD(+) as cofactor.

It localises to the cytoplasm. It catalyses the reaction 7-phospho-2-dehydro-3-deoxy-D-arabino-heptonate = 3-dehydroquinate + phosphate. It participates in metabolic intermediate biosynthesis; chorismate biosynthesis; chorismate from D-erythrose 4-phosphate and phosphoenolpyruvate: step 2/7. Functionally, catalyzes the conversion of 3-deoxy-D-arabino-heptulosonate 7-phosphate (DAHP) to dehydroquinate (DHQ). This chain is 3-dehydroquinate synthase, found in Pseudomonas entomophila (strain L48).